A 374-amino-acid polypeptide reads, in one-letter code: Anhydro-N-acetylmuramic acid kinase (374 aa).

Residue 12–19 (GTSLDGVD) participates in ATP binding.

It belongs to the anhydro-N-acetylmuramic acid kinase family.

It carries out the reaction 1,6-anhydro-N-acetyl-beta-muramate + ATP + H2O = N-acetyl-D-muramate 6-phosphate + ADP + H(+). It functions in the pathway amino-sugar metabolism; 1,6-anhydro-N-acetylmuramate degradation. Its pathway is cell wall biogenesis; peptidoglycan recycling. Catalyzes the specific phosphorylation of 1,6-anhydro-N-acetylmuramic acid (anhMurNAc) with the simultaneous cleavage of the 1,6-anhydro ring, generating MurNAc-6-P. Is required for the utilization of anhMurNAc either imported from the medium or derived from its own cell wall murein, and thus plays a role in cell wall recycling. The polypeptide is Anhydro-N-acetylmuramic acid kinase (Enterobacter sp. (strain 638)).